The primary structure comprises 416 residues: Transcription factor LATE FLOWERING (416 aa).

2 stretches are compositionally biased toward low complexity: residues 176 to 186 (STTTTTTALPP) and 200 to 212 (TSPT…TSET). Disordered stretches follow at residues 176–226 (STTT…AGGS) and 276–311 (LGGP…QTVA). Positions 303 to 316 (ISSDPQTVAARLRR) are basic motif; degenerate. The bHLH domain maps to 303 to 352 (ISSDPQTVAARLRRERVSERLRVLQRLVPGGSKMDTATMLDEAASYLKFL). The segment at 317 to 352 (ERVSERLRVLQRLVPGGSKMDTATMLDEAASYLKFL) is helix-loop-helix motif.

Belongs to the bHLH protein family. Interacts with PIL13 and PIL15.

It localises to the nucleus. Its function is as follows. Transcription factor involved in the negative regulation of flowering. May be involved in the repression of the flowering factor GI and HD1 by interacting with PIL13 and PIL15 and competing with PRR1. Possesses transactivation activity in yeast. This Oryza sativa subsp. japonica (Rice) protein is Transcription factor LATE FLOWERING.